The sequence spans 342 residues: Oxygen-dependent coproporphyrinogen-III oxidase (342 aa).

Residue serine 98 participates in substrate binding. Residues histidine 102 and histidine 112 each contribute to the a divalent metal cation site. Histidine 112 acts as the Proton donor in catalysis. 114 to 116 contacts substrate; sequence NYR. A divalent metal cation-binding residues include histidine 146 and histidine 176. The interval 266–301 is important for dimerization; it reads YVEFNLVWDRGTIFGLQTNGRTESILMSLPPLARWE.

The protein belongs to the aerobic coproporphyrinogen-III oxidase family. Homodimer. The cofactor is a divalent metal cation.

It is found in the cytoplasm. It carries out the reaction coproporphyrinogen III + O2 + 2 H(+) = protoporphyrinogen IX + 2 CO2 + 2 H2O. It participates in porphyrin-containing compound metabolism; protoporphyrin-IX biosynthesis; protoporphyrinogen-IX from coproporphyrinogen-III (O2 route): step 1/1. In terms of biological role, involved in the heme and chlorophyll biosynthesis. Catalyzes the aerobic oxidative decarboxylation of propionate groups of rings A and B of coproporphyrinogen-III to yield the vinyl groups in protoporphyrinogen-IX. This Prochlorococcus marinus (strain MIT 9312) protein is Oxygen-dependent coproporphyrinogen-III oxidase.